The sequence spans 78 residues: uncharacterized protein (78 aa).

Residues M1–A45 form the signal peptide.

It to E.coli YkfL.

This is an uncharacterized protein from Escherichia coli (strain K12).